Consider the following 430-residue polypeptide: Enolase (430 aa).

Positions 1–140 (MPYIVDVYAR…YQYLGGFNSK (140 aa)) are sufficient for secretion. Position 141 is a phosphothreonine (Thr-141). A (2R)-2-phosphoglycerate-binding site is contributed by Gln-163. Glu-205 (proton donor) is an active-site residue. Asp-242 is a Mg(2+) binding site. Residue Ser-259 is modified to Phosphoserine. Tyr-281 bears the Phosphotyrosine mark. Positions 287 and 314 each coordinate Mg(2+). A Phosphoserine modification is found at Ser-325. Residues Lys-339, Arg-368, Ser-369, and Lys-390 each coordinate (2R)-2-phosphoglycerate. The Proton acceptor role is filled by Lys-339.

It belongs to the enolase family. Homooctamer. Component of the RNA degradosome complex composed of rny, rnjA, rnjB, pnp, pfkA and eno (although rnjA and rnjB's presence is controversial). Mg(2+) is required as a cofactor. Phosphorylated during sporulation.

Its subcellular location is the cytoplasm. It is found in the secreted. It localises to the cell surface. It catalyses the reaction (2R)-2-phosphoglycerate = phosphoenolpyruvate + H2O. Its pathway is carbohydrate degradation; glycolysis; pyruvate from D-glyceraldehyde 3-phosphate: step 4/5. With respect to regulation, covalent binding to the substrate (probably 2-PG) at Lys-339 of a small fraction of enolase causes inactivation of the enzyme, and possibly serves as a signal for the export of the protein. Citrate acts as a non-competitive inhibitor for both forward and reverse reactions, probably by chelating Mg(2+). In terms of biological role, catalyzes the reversible conversion of 2-phosphoglycerate (2-PG) into phosphoenolpyruvate (PEP). It is essential for the degradation of carbohydrates via glycolysis. Its function is as follows. A component of the RNA degradosome, a multi-enzyme complex involved in RNA processing and messenger RNA degradation. The chain is Enolase from Bacillus subtilis (strain 168).